Consider the following 332-residue polypeptide: Malate dehydrogenase (332 aa).

NAD(+) is bound by residues 11–16 and Asp35; that span reads GAGNVG. Substrate contacts are provided by Arg97 and Arg103. Residues Asn110 and 133–135 contribute to the NAD(+) site; that span reads VTN. The substrate site is built by Asn135 and Arg166. The Proton acceptor role is filled by His190.

The protein belongs to the LDH/MDH superfamily. MDH type 3 family.

It catalyses the reaction (S)-malate + NAD(+) = oxaloacetate + NADH + H(+). Catalyzes the reversible oxidation of malate to oxaloacetate. The protein is Malate dehydrogenase of Hydrogenobaculum sp. (strain Y04AAS1).